We begin with the raw amino-acid sequence, 511 residues long: Maturase K (511 aa).

The protein belongs to the intron maturase 2 family. MatK subfamily.

It is found in the plastid. It localises to the chloroplast. In terms of biological role, usually encoded in the trnK tRNA gene intron. Probably assists in splicing its own and other chloroplast group II introns. This chain is Maturase K, found in Anchomanes difformis (Amorphophallus difformis).